The sequence spans 424 residues: UDP-sugar transporter protein SLC35A5 (424 aa).

The Cytoplasmic portion of the chain corresponds to 1-8 (MEKQCCSH). The helical transmembrane segment at 9-29 (PVICSLSTMYTFLLGAIFIAL) threads the bilayer. Over 30 to 53 (SSSRILLVKYSANEENKYDYLPTT) the chain is Lumenal. A helical transmembrane segment spans residues 54–74 (VNVCSELVKLVFCVLVSFCVI). Topologically, residues 75 to 93 (KKDHQSRNLKYASWKEFSD) are cytoplasmic. A helical membrane pass occupies residues 94 to 116 (FMKWSIPAFLYFLDNLIVFYVLS). Residues 117-119 (YLQ) lie on the Lumenal side of the membrane. The helical transmembrane segment at 120–142 (PAMAVIFSNFSIITTALLFRIVL) threads the bilayer. Topologically, residues 143–147 (KRRLN) are cytoplasmic. A helical transmembrane segment spans residues 148 to 168 (WIQWASLLTLFLSIVALTAGT). Over 169–228 (KTLQHNLAGRGFHHDAFFSPSNSCLLFRSECPRKDNCTAKEWTFPEAKWNTTARVFSHIR) the chain is Lumenal. A glycan (N-linked (GlcNAc...) asparagine) is linked at asparagine 204. Residues 229-249 (LGMGHVLIIVQCFISSMANIY) form a helical membrane-spanning segment. The Cytoplasmic portion of the chain corresponds to 250-263 (NEKILKEGNQLTES). A helical transmembrane segment spans residues 264-284 (IFIQNSKLYFFGILFNGLTLG). Topologically, residues 285 to 303 (LQRSNRDQIKNCGFFYGHS) are lumenal. Residues 304 to 324 (AFSVALIFVTAFQGLSVAFIL) form a helical membrane-spanning segment. Residues 325-330 (KFLDNM) are Cytoplasmic-facing. The helical transmembrane segment at 331–351 (FHVLMAQVTTVIITTVSVLVF) threads the bilayer. The Lumenal segment spans residues 352-354 (DFR). A helical membrane pass occupies residues 355-375 (PSLEFFLEAPSVLLSIFIYNA). Residues 376-424 (SKPQVPEYAPRQERIRDLSGNLWERSSGDGEELERLTKPKSDESDEDTF) lie on the Cytoplasmic side of the membrane. Phosphoserine occurs at positions 394, 416, and 419. The segment at 397-424 (LWERSSGDGEELERLTKPKSDESDEDTF) is disordered. The segment covering 408-417 (LERLTKPKSD) has biased composition (basic and acidic residues).

This sequence belongs to the nucleotide-sugar transporter family. SLC35A subfamily. Probably forms homooligomers and heterooligomers with SLC35A1, SLC35A2, SLC35A3 and SLC35A4.

The protein localises to the golgi apparatus membrane. The catalysed reaction is UMP(out) + UDP-alpha-D-glucuronate(in) = UMP(in) + UDP-alpha-D-glucuronate(out). It catalyses the reaction UMP(out) + UDP-N-acetyl-alpha-D-glucosamine(in) = UMP(in) + UDP-N-acetyl-alpha-D-glucosamine(out). The enzyme catalyses UDP-N-acetyl-alpha-D-galactosamine(in) + UMP(out) = UDP-N-acetyl-alpha-D-galactosamine(out) + UMP(in). Its function is as follows. Probable UDP-sugar:UMP transmembrane antiporter involved in UDP-alpha-D-glucuronate/UDP-GlcA, UDP-GlcNAc/UDP-N-acetyl-alpha-D-glucosamine and UDP-N-acetyl-alpha-D-galactosamine/UDP-GalNAc transport from the cytosol to the lumen of the Golgi. In Homo sapiens (Human), this protein is UDP-sugar transporter protein SLC35A5.